A 215-amino-acid chain; its full sequence is ER lumen protein-retaining receptor A (215 aa).

Topologically, residues Met-1–Asn-2 are lumenal. A helical transmembrane segment spans residues Ile-3–Leu-21. Residues Lys-22–Lys-35 are Cytoplasmic-facing. Residues Thr-36–Thr-53 traverse the membrane as a helical segment. Residues Asp-54–Ser-61 are Lumenal-facing. The helical transmembrane segment at Ile-62–Pro-82 threads the bilayer. The Cytoplasmic segment spans residues Leu-83–Gln-98. Residues Tyr-99–Asn-112 traverse the membrane as a helical segment. Residues Glu-113 to Glu-119 are Lumenal-facing. A helical transmembrane segment spans residues Val-120 to Leu-139. The Cytoplasmic segment spans residues Leu-140–Gly-151. A helical transmembrane segment spans residues Gln-152–Tyr-170. Topologically, residues Arg-171–Trp-181 are lumenal. The chain crosses the membrane as a helical span at residues Ile-182–Tyr-202. Residues Ile-203–Ala-215 lie on the Cytoplasmic side of the membrane.

The protein belongs to the ERD2 family.

The protein resides in the endoplasmic reticulum membrane. Functionally, required for the retention of luminal endoplasmic reticulum proteins. Determines the specificity of the luminal ER protein retention system. Also required for normal vesicular traffic through the Golgi. This receptor recognizes H-D-E-L. The protein is ER lumen protein-retaining receptor A (ERD2A) of Arabidopsis thaliana (Mouse-ear cress).